A 383-amino-acid chain; its full sequence is Chaperone protein DnaJ (383 aa).

Residues 5-70 (DYYDVLGVSK…DKKAAYDRYG (66 aa)) enclose the J domain. The CR-type zinc-finger motif lies at 142–220 (GMQKTISVPG…CRGAGREEKT (79 aa)). 8 residues coordinate Zn(2+): C155, C158, C172, C175, C194, C197, C208, and C211. CXXCXGXG motif repeat units follow at residues 155–162 (CSACEGTG), 172–179 (CPTCSGMG), 194–201 (CPTCSGMG), and 208–215 (CQACRGAG).

The protein belongs to the DnaJ family. Homodimer. Zn(2+) serves as cofactor.

The protein resides in the cytoplasm. In terms of biological role, participates actively in the response to hyperosmotic and heat shock by preventing the aggregation of stress-denatured proteins and by disaggregating proteins, also in an autonomous, DnaK-independent fashion. Unfolded proteins bind initially to DnaJ; upon interaction with the DnaJ-bound protein, DnaK hydrolyzes its bound ATP, resulting in the formation of a stable complex. GrpE releases ADP from DnaK; ATP binding to DnaK triggers the release of the substrate protein, thus completing the reaction cycle. Several rounds of ATP-dependent interactions between DnaJ, DnaK and GrpE are required for fully efficient folding. Also involved, together with DnaK and GrpE, in the DNA replication of plasmids through activation of initiation proteins. The polypeptide is Chaperone protein DnaJ (Dinoroseobacter shibae (strain DSM 16493 / NCIMB 14021 / DFL 12)).